Consider the following 130-residue polypeptide: Small ribosomal subunit protein uS9 (130 aa).

The protein belongs to the universal ribosomal protein uS9 family.

The chain is Small ribosomal subunit protein uS9 from Geotalea uraniireducens (strain Rf4) (Geobacter uraniireducens).